We begin with the raw amino-acid sequence, 65 residues long: MPVVRVSWFEGKDAKAKKAVAAEITDSIVKHAGTDPKYIYVIFEDIKPSDWAGAGRLYGEEPGTP.

Pro-2 (proton acceptor; via imino nitrogen) is an active-site residue.

The protein belongs to the 4-oxalocrotonate tautomerase family.

The polypeptide is Probable tautomerase RSp1151 (Ralstonia nicotianae (strain ATCC BAA-1114 / GMI1000) (Ralstonia solanacearum)).